We begin with the raw amino-acid sequence, 124 residues long: Small ribosomal subunit protein uS12 (124 aa).

A 3-methylthioaspartic acid modification is found at Asp89. Positions Thr101–Glu124 are disordered.

The protein belongs to the universal ribosomal protein uS12 family. In terms of assembly, part of the 30S ribosomal subunit. Contacts proteins S8 and S17. May interact with IF1 in the 30S initiation complex.

In terms of biological role, with S4 and S5 plays an important role in translational accuracy. Interacts with and stabilizes bases of the 16S rRNA that are involved in tRNA selection in the A site and with the mRNA backbone. Located at the interface of the 30S and 50S subunits, it traverses the body of the 30S subunit contacting proteins on the other side and probably holding the rRNA structure together. The combined cluster of proteins S8, S12 and S17 appears to hold together the shoulder and platform of the 30S subunit. The polypeptide is Small ribosomal subunit protein uS12 (Synechococcus sp. (strain CC9902)).